Consider the following 299-residue polypeptide: Oxygen-dependent coproporphyrinogen-III oxidase (299 aa).

Ser-92 provides a ligand contact to substrate. Positions 96 and 106 each coordinate a divalent metal cation. His-106 (proton donor) is an active-site residue. Residue 108-110 (NVR) participates in substrate binding. Positions 145 and 175 each coordinate a divalent metal cation. Residues 240–275 (YVEFNLVWDRGTLFGLQTGGRTESILMSMPPLVRWE) form an important for dimerization region. Position 258–260 (258–260 (GGR)) interacts with substrate.

Belongs to the aerobic coproporphyrinogen-III oxidase family. In terms of assembly, homodimer. It depends on a divalent metal cation as a cofactor.

It localises to the cytoplasm. It catalyses the reaction coproporphyrinogen III + O2 + 2 H(+) = protoporphyrinogen IX + 2 CO2 + 2 H2O. It functions in the pathway porphyrin-containing compound metabolism; protoporphyrin-IX biosynthesis; protoporphyrinogen-IX from coproporphyrinogen-III (O2 route): step 1/1. Involved in the heme biosynthesis. Catalyzes the aerobic oxidative decarboxylation of propionate groups of rings A and B of coproporphyrinogen-III to yield the vinyl groups in protoporphyrinogen-IX. The protein is Oxygen-dependent coproporphyrinogen-III oxidase of Citrobacter koseri (strain ATCC BAA-895 / CDC 4225-83 / SGSC4696).